The following is a 1270-amino-acid chain: DNA-directed RNA polymerase subunit beta (1270 aa).

Belongs to the RNA polymerase beta chain family. In terms of assembly, the RNAP catalytic core consists of 2 alpha, 1 beta, 1 beta' and 1 omega subunit. When a sigma factor is associated with the core the holoenzyme is formed, which can initiate transcription.

The enzyme catalyses RNA(n) + a ribonucleoside 5'-triphosphate = RNA(n+1) + diphosphate. DNA-dependent RNA polymerase catalyzes the transcription of DNA into RNA using the four ribonucleoside triphosphates as substrates. The chain is DNA-directed RNA polymerase subunit beta from Christiangramia forsetii (strain DSM 17595 / CGMCC 1.15422 / KT0803) (Gramella forsetii).